We begin with the raw amino-acid sequence, 437 residues long: MNIAVVGLSHRTAPVEVREKLSISDEHIEKSFCSLNATEQVLEVSILSTCNRLEIYALVKNQELGVSAIKEFLIDHSGLSKEDLFPHLFTFNQAEAVNHLMRVSGGLDSLVLGEGQILSQVKKMVRLGQDYKSIGPILNRLLTQAVSTGKKVRSDTNLGTGAVSISSAAVELAQLKLGQSLGKDQLMTLQSEKVAVIGAGRMSRLLIQHLQSKGCSKLTLLNRTLNRAESLAKDFPDLDVKCGLLDDLDKCIEFSTLIFTSTASNTPIINSELLSGFKRNNNLLRLIDIGVPRNIASDVSGLPGFEAYDVDDLQEVVARNQDARQQIAIEAQNLIDEEARVFLEWWASLEAVPTINRLRSNLESIRKEELQKALSRMGPDFSARERKVVEALSKGIINKILHTPVTNLRAPQPSSQRKESLKIVESLFELGVSENDQ.

Residues 49–52 (TCNR), Ser-109, 114–116 (EGQ), and Gln-120 contribute to the substrate site. Catalysis depends on Cys-50, which acts as the Nucleophile. An NADP(+)-binding site is contributed by 198-203 (GAGRMS).

Belongs to the glutamyl-tRNA reductase family. In terms of assembly, homodimer.

The enzyme catalyses (S)-4-amino-5-oxopentanoate + tRNA(Glu) + NADP(+) = L-glutamyl-tRNA(Glu) + NADPH + H(+). The protein operates within porphyrin-containing compound metabolism; protoporphyrin-IX biosynthesis; 5-aminolevulinate from L-glutamyl-tRNA(Glu): step 1/2. It functions in the pathway porphyrin-containing compound metabolism; chlorophyll biosynthesis. Catalyzes the NADPH-dependent reduction of glutamyl-tRNA(Glu) to glutamate 1-semialdehyde (GSA). This is Glutamyl-tRNA reductase from Prochlorococcus marinus (strain SARG / CCMP1375 / SS120).